A 450-amino-acid chain; its full sequence is 3-phosphoshikimate 1-carboxyvinyltransferase (450 aa).

Positions 28, 29, and 33 each coordinate 3-phosphoshikimate. Lys28 is a binding site for phosphoenolpyruvate. 2 residues coordinate phosphoenolpyruvate: Gly100 and Arg128. 4 residues coordinate 3-phosphoshikimate: Ser173, Gln175, Asp326, and Lys353. Gln175 contributes to the phosphoenolpyruvate binding site. Asp326 acts as the Proton acceptor in catalysis. The phosphoenolpyruvate site is built by Arg357 and Arg402.

The protein belongs to the EPSP synthase family. As to quaternary structure, monomer.

It is found in the cytoplasm. It carries out the reaction 3-phosphoshikimate + phosphoenolpyruvate = 5-O-(1-carboxyvinyl)-3-phosphoshikimate + phosphate. It participates in metabolic intermediate biosynthesis; chorismate biosynthesis; chorismate from D-erythrose 4-phosphate and phosphoenolpyruvate: step 6/7. Catalyzes the transfer of the enolpyruvyl moiety of phosphoenolpyruvate (PEP) to the 5-hydroxyl of shikimate-3-phosphate (S3P) to produce enolpyruvyl shikimate-3-phosphate and inorganic phosphate. This is 3-phosphoshikimate 1-carboxyvinyltransferase from Brucella canis (strain ATCC 23365 / NCTC 10854 / RM-666).